Here is a 202-residue protein sequence, read N- to C-terminus: Putative transposon Tn552 DNA-invertase bin3 (202 aa).

Residues 1–143 form the Resolvase/invertase-type recombinase catalytic domain; it reads MIIGYARVSS…QGIQVAKEKG (143 aa). The active-site O-(5'-phospho-DNA)-serine intermediate is the serine 9.

This sequence belongs to the site-specific recombinase resolvase family.

Functionally, potential DNA invertase. The polypeptide is Putative transposon Tn552 DNA-invertase bin3 (bin3) (Staphylococcus aureus).